The chain runs to 205 residues: Proteasome subunit beta type-3 (205 aa).

Position 2 is an N-acetylserine (Ser2). Position 77 is an N6-acetyllysine (Lys77).

It belongs to the peptidase T1B family. In terms of assembly, the 26S proteasome consists of a 20S proteasome core and two 19S regulatory subunits. The 20S proteasome core is a barrel-shaped complex made of 28 subunits that are arranged in four stacked rings. The two outer rings are each formed by seven alpha subunits, and the two inner rings are formed by seven beta subunits. The proteolytic activity is exerted by three beta-subunits PSMB5, PSMB6 and PSMB7.

The protein localises to the cytoplasm. Its subcellular location is the nucleus. Non-catalytic component of the 20S core proteasome complex involved in the proteolytic degradation of most intracellular proteins. This complex plays numerous essential roles within the cell by associating with different regulatory particles. Associated with two 19S regulatory particles, forms the 26S proteasome and thus participates in the ATP-dependent degradation of ubiquitinated proteins. The 26S proteasome plays a key role in the maintenance of protein homeostasis by removing misfolded or damaged proteins that could impair cellular functions, and by removing proteins whose functions are no longer required. Associated with the PA200 or PA28, the 20S proteasome mediates ubiquitin-independent protein degradation. This type of proteolysis is required in several pathways including spermatogenesis (20S-PA200 complex) or generation of a subset of MHC class I-presented antigenic peptides (20S-PA28 complex). The sequence is that of Proteasome subunit beta type-3 (PSMB3) from Bos taurus (Bovine).